The sequence spans 415 residues: Probable tRNA pseudouridine synthase D (415 aa).

The Nucleophile role is filled by Asp-83. The TRUD domain occupies 158–378 (GFPNYFGYQR…PGRRRELLIR (221 aa)).

This sequence belongs to the pseudouridine synthase TruD family.

It catalyses the reaction uridine(13) in tRNA = pseudouridine(13) in tRNA. Could be responsible for synthesis of pseudouridine from uracil-13 in transfer RNAs. In Thermococcus gammatolerans (strain DSM 15229 / JCM 11827 / EJ3), this protein is Probable tRNA pseudouridine synthase D.